A 1019-amino-acid chain; its full sequence is Probable ubiquitination network signaling protein acrB (1019 aa).

Residues 1 to 142 (MPRSSATARK…TGNKRSPSNA (142 aa)) are disordered. The segment covering 33–63 (NGHLNGNLNGGSASSSLSSSQVDLPSSRSSS) has biased composition (low complexity). Composition is skewed to polar residues over residues 68–83 (PTTT…TPDS), 102–117 (TDMS…SQTG), and 131–142 (SATGNKRSPSNA). 3 helical membrane-spanning segments follow: residues 163–183 (IAIL…VQFL), 216–236 (LGTM…FMWT), and 259–279 (FGKN…MHLV). Disordered regions lie at residues 343–372 (ARRS…GSQT), 580–603 (DAEQ…PTTT), 831–859 (LDPG…GALT), 879–905 (SPLQ…PSYL), and 963–1019 (DKRS…GKTN). A coiled-coil region spans residues 602–788 (TTLKNSIVNA…REQDQAKLEA (187 aa)). A compositionally biased stretch (gly residues) spans 992-1008 (RGSGSGSNGSGGSGSGS).

The protein belongs to the acrB family.

The protein resides in the membrane. Functionally, component of the regulatory network controlling carbon source utilization through ubiquitination and deubiquitination involving creA, creB, creC, creD and acrB. Involved in resistance to acriflavine, and required for normal growth on a range of sole carbon sources, including fructose, cellobiose, raffinose, and starch, and reduced utilization of amino acids, including GABA and beta-alanine, as sole carbon and nitrogen sources. The sequence is that of Probable ubiquitination network signaling protein acrB (acrB) from Neosartorya fischeri (strain ATCC 1020 / DSM 3700 / CBS 544.65 / FGSC A1164 / JCM 1740 / NRRL 181 / WB 181) (Aspergillus fischerianus).